The following is a 105-amino-acid chain: ESAT-6-like protein EsxB (105 aa).

The tract at residues 1–23 (MSQGFKTEADVMRNTAHRVDDTN) is disordered. The segment covering 7–21 (TEADVMRNTAHRVDD) has biased composition (basic and acidic residues).

The protein belongs to the WXG100 family. CFP-10 subfamily. Forms a tight 1:1 complex with EsxB.

This Corynebacterium diphtheriae (strain ATCC 700971 / NCTC 13129 / Biotype gravis) protein is ESAT-6-like protein EsxB.